A 63-amino-acid chain; its full sequence is Large ribosomal subunit protein bL28 (63 aa).

This sequence belongs to the bacterial ribosomal protein bL28 family.

This chain is Large ribosomal subunit protein bL28, found in Desulfosudis oleivorans (strain DSM 6200 / JCM 39069 / Hxd3) (Desulfococcus oleovorans).